We begin with the raw amino-acid sequence, 1448 residues long: Sister chromatid cohesion protein PDS5 homolog B-A (1448 aa).

Residues 383 to 419 (LLVNDQLLNFVRERTLDKRWRVRKEAMMGLAQIYKKY) form an HEAT repeat. Residues 1141–1155 (AGKQMLSKSSRMETV) are compositionally biased toward polar residues. The disordered stretch occupies residues 1141–1448 (AGKQMLSKSS…TGRLRSAKKR (308 aa)). Positions 1156–1168 (SNASSGSNPSSPG) are enriched in low complexity. The span at 1177-1186 (MELDQSENED) shows a compositional bias: acidic residues. Basic and acidic residues-rich tracts occupy residues 1196–1214 (KKSDKRDDSDLLKSELEKP), 1233–1243 (ELSKPAQEPKS), and 1264–1273 (WQEKRLKEDL). Residues 1285–1294 (KKGRRGRPPK) are compositionally biased toward basic residues. The segment at residues 1286–1298 (KGRRGRPPKSAKM) is a DNA-binding region (a.T hook 1). Positions 1324–1341 (PTDEDDHLEISEEQDFEN) are enriched in acidic residues. Positions 1346–1356 (RKGRGSSRRTP) are enriched in basic residues. 2 DNA-binding regions (a.T hook) span residues 1374 to 1386 (QKRRGRPPKTPTV) and 1390 to 1402 (KSHVGRPRKVVSK). Residues 1389–1399 (KKSHVGRPRKV) are compositionally biased toward basic residues.

Belongs to the PDS5 family. As to quaternary structure, interacts with the cohesin complex. In terms of processing, phosphorylated in mitotic cells.

The protein resides in the nucleus. Its function is as follows. Plays a role in androgen-induced proliferative arrest. Required for maintenance of sister chromatid cohesion during mitosis. The chain is Sister chromatid cohesion protein PDS5 homolog B-A (pds5b-a) from Xenopus laevis (African clawed frog).